The primary structure comprises 314 residues: 4-hydroxy-3-methylbut-2-enyl diphosphate reductase (314 aa).

Cysteine 12 contributes to the [4Fe-4S] cluster binding site. Residues histidine 41 and histidine 74 each coordinate (2E)-4-hydroxy-3-methylbut-2-enyl diphosphate. Dimethylallyl diphosphate-binding residues include histidine 41 and histidine 74. Isopentenyl diphosphate contacts are provided by histidine 41 and histidine 74. Cysteine 96 lines the [4Fe-4S] cluster pocket. Residue histidine 124 participates in (2E)-4-hydroxy-3-methylbut-2-enyl diphosphate binding. Dimethylallyl diphosphate is bound at residue histidine 124. Residue histidine 124 participates in isopentenyl diphosphate binding. Glutamate 126 functions as the Proton donor in the catalytic mechanism. A (2E)-4-hydroxy-3-methylbut-2-enyl diphosphate-binding site is contributed by threonine 168. Cysteine 198 is a binding site for [4Fe-4S] cluster. The (2E)-4-hydroxy-3-methylbut-2-enyl diphosphate site is built by serine 226, serine 227, asparagine 228, and serine 270. Dimethylallyl diphosphate contacts are provided by serine 226, serine 227, asparagine 228, and serine 270. 4 residues coordinate isopentenyl diphosphate: serine 226, serine 227, asparagine 228, and serine 270.

Belongs to the IspH family. [4Fe-4S] cluster serves as cofactor.

The catalysed reaction is isopentenyl diphosphate + 2 oxidized [2Fe-2S]-[ferredoxin] + H2O = (2E)-4-hydroxy-3-methylbut-2-enyl diphosphate + 2 reduced [2Fe-2S]-[ferredoxin] + 2 H(+). It carries out the reaction dimethylallyl diphosphate + 2 oxidized [2Fe-2S]-[ferredoxin] + H2O = (2E)-4-hydroxy-3-methylbut-2-enyl diphosphate + 2 reduced [2Fe-2S]-[ferredoxin] + 2 H(+). It functions in the pathway isoprenoid biosynthesis; dimethylallyl diphosphate biosynthesis; dimethylallyl diphosphate from (2E)-4-hydroxy-3-methylbutenyl diphosphate: step 1/1. It participates in isoprenoid biosynthesis; isopentenyl diphosphate biosynthesis via DXP pathway; isopentenyl diphosphate from 1-deoxy-D-xylulose 5-phosphate: step 6/6. Catalyzes the conversion of 1-hydroxy-2-methyl-2-(E)-butenyl 4-diphosphate (HMBPP) into a mixture of isopentenyl diphosphate (IPP) and dimethylallyl diphosphate (DMAPP). Acts in the terminal step of the DOXP/MEP pathway for isoprenoid precursor biosynthesis. The sequence is that of 4-hydroxy-3-methylbut-2-enyl diphosphate reductase from Pseudomonas fluorescens (strain Pf0-1).